A 508-amino-acid chain; its full sequence is 3-octaprenyl-4-hydroxybenzoate carboxy-lyase (508 aa).

Residue Asn-178 participates in Mn(2+) binding. Residues 181-183 (IYR), 195-197 (RWL), and 200-201 (RG) contribute to the prenylated FMN site. Glu-244 provides a ligand contact to Mn(2+). Residue Asp-303 is the Proton donor of the active site.

It belongs to the UbiD family. As to quaternary structure, homohexamer. Prenylated FMN is required as a cofactor. It depends on Mn(2+) as a cofactor.

It localises to the cell membrane. It catalyses the reaction a 4-hydroxy-3-(all-trans-polyprenyl)benzoate + H(+) = a 2-(all-trans-polyprenyl)phenol + CO2. The protein operates within cofactor biosynthesis; ubiquinone biosynthesis. Catalyzes the decarboxylation of 3-octaprenyl-4-hydroxy benzoate to 2-octaprenylphenol, an intermediate step in ubiquinone biosynthesis. The sequence is that of 3-octaprenyl-4-hydroxybenzoate carboxy-lyase from Cupriavidus taiwanensis (strain DSM 17343 / BCRC 17206 / CCUG 44338 / CIP 107171 / LMG 19424 / R1) (Ralstonia taiwanensis (strain LMG 19424)).